The primary structure comprises 242 residues: 1-(5-phosphoribosyl)-5-[(5-phosphoribosylamino)methylideneamino] imidazole-4-carboxamide isomerase (242 aa).

Asp8 (proton acceptor) is an active-site residue. Asp129 (proton donor) is an active-site residue.

Belongs to the HisA/HisF family.

Its subcellular location is the cytoplasm. It catalyses the reaction 1-(5-phospho-beta-D-ribosyl)-5-[(5-phospho-beta-D-ribosylamino)methylideneamino]imidazole-4-carboxamide = 5-[(5-phospho-1-deoxy-D-ribulos-1-ylimino)methylamino]-1-(5-phospho-beta-D-ribosyl)imidazole-4-carboxamide. It participates in amino-acid biosynthesis; L-histidine biosynthesis; L-histidine from 5-phospho-alpha-D-ribose 1-diphosphate: step 4/9. This Clostridium botulinum (strain Kyoto / Type A2) protein is 1-(5-phosphoribosyl)-5-[(5-phosphoribosylamino)methylideneamino] imidazole-4-carboxamide isomerase.